The following is a 433-amino-acid chain: Serine/threonine-protein phosphatase 2A activator 2 (433 aa).

The span at 1-10 (MTSQAPPQPA) shows a compositional bias: pro residues. Disordered regions lie at residues 1 to 67 (MTSQ…NWTF) and 367 to 400 (SMSEDTGAGDEADVEDDPHAGHDHTGKAHDGTGW). Low complexity predominate over residues 11 to 23 (SSPGVAAPAAASS). Over residues 45 to 59 (NPTPIPETPALPTPP) the composition is skewed to pro residues. Residues 367–382 (SMSEDTGAGDEADVED) are compositionally biased toward acidic residues. Residues 383–396 (DPHAGHDHTGKAHD) show a composition bias toward basic and acidic residues.

It belongs to the PTPA-type PPIase family.

The protein resides in the cytoplasm. The catalysed reaction is [protein]-peptidylproline (omega=180) = [protein]-peptidylproline (omega=0). Its function is as follows. PPIases accelerate the folding of proteins. It catalyzes the cis-trans isomerization of proline imidic peptide bonds in oligopeptides. Acts as a regulatory subunit for PP2A-like phosphatases modulating their activity or substrate specificity, probably by inducing a conformational change in the catalytic subunit, a direct target of the PPIase. Can reactivate inactive phosphatase PP2A-phosphatase methylesterase complexes (PP2Ai) in presence of ATP and Mg(2+) by dissociating the inactive form from the complex. The polypeptide is Serine/threonine-protein phosphatase 2A activator 2 (RRD2) (Gibberella zeae (strain ATCC MYA-4620 / CBS 123657 / FGSC 9075 / NRRL 31084 / PH-1) (Wheat head blight fungus)).